The chain runs to 204 residues: Ras-related protein Rab-1D (204 aa).

GTP-binding positions include 17–25, 35–42, 65–69, 123–126, and 153–155; these read GDSGVGKSC, WTDTHIST, DTAGQ, NKTD, and SAK. Residues 39-47 carry the Effector region motif; that stretch reads HISTIGVDF. The span at 182–191 shows a compositional bias: basic and acidic residues; it reads PKPDEVDIKS. Positions 182-204 are disordered; that stretch reads PKPDEVDIKSKNKTKSGGKKSFC. Residues 192–204 are compositionally biased toward basic residues; the sequence is KNKTKSGGKKSFC. C204 carries S-geranylgeranyl cysteine lipidation.

Belongs to the small GTPase superfamily. Rab family.

It localises to the cell membrane. In Dictyostelium discoideum (Social amoeba), this protein is Ras-related protein Rab-1D (rab1D).